A 789-amino-acid polypeptide reads, in one-letter code: SH3 domain-containing protein 19 (789 aa).

Disordered regions lie at residues T24 to L170, D209 to P404, and T472 to P497. S65 bears the Phosphoserine mark. Positions S296–E305 are enriched in basic and acidic residues. A compositionally biased stretch (pro residues) spans W335–L351. Positions P352–L361 are enriched in low complexity. Residue S368 is modified to Phosphoserine. SH3 domains lie at L414 to E476, S494 to D553, A570 to D629, P660 to A719, and P729 to V788. The span at L474–D484 shows a compositional bias: basic and acidic residues. The tract at residues A635–E663 is disordered.

Interacts with ADAM12. Isoform 2 (but not isoform 1) interacts with ADAM9, ADAM10, ADAM15 and ADAM17. Interacts with SH3GL1 SH3 domain. Interacts via SH3 3 and SH3 4 or SH3 4 and SH3 5 domains with SOS2. Probably forms a trimeric complex with SH3GL1 and SOS2. Interacts with SH3YL1. As to expression, expressed in hair follicles.

The protein resides in the cytoplasm. Its function is as follows. May play a role in regulating A disintegrin and metalloproteases (ADAMs) in the signaling of EGFR-ligand shedding. May be involved in suppression of Ras-induced cellular transformation and Ras-mediated activation of ELK1. Plays a role in the regulation of cell morphology and cytoskeletal organization. This is SH3 domain-containing protein 19 (Sh3d19) from Mus musculus (Mouse).